A 444-amino-acid polypeptide reads, in one-letter code: ATP-dependent protease ATPase subunit HslU (444 aa).

ATP-binding positions include Ile-20 and 62–67; that span reads GVGKTE. The tract at residues 130 to 158 is disordered; it reads EDRILDALVPPPRGASGEPERGEDNSARQ. Positions 257, 322, and 394 each coordinate ATP.

It belongs to the ClpX chaperone family. HslU subfamily. As to quaternary structure, a double ring-shaped homohexamer of HslV is capped on each side by a ring-shaped HslU homohexamer. The assembly of the HslU/HslV complex is dependent on binding of ATP.

The protein localises to the cytoplasm. Its function is as follows. ATPase subunit of a proteasome-like degradation complex; this subunit has chaperone activity. The binding of ATP and its subsequent hydrolysis by HslU are essential for unfolding of protein substrates subsequently hydrolyzed by HslV. HslU recognizes the N-terminal part of its protein substrates and unfolds these before they are guided to HslV for hydrolysis. This chain is ATP-dependent protease ATPase subunit HslU, found in Bordetella parapertussis (strain 12822 / ATCC BAA-587 / NCTC 13253).